A 331-amino-acid polypeptide reads, in one-letter code: Major outer membrane protein P.IB (331 aa).

The N-terminal stretch at 1–19 (MKKSLIALTLAALPVAAMA) is a signal peptide.

It belongs to the Gram-negative porin family. Homotrimer.

The protein localises to the cell outer membrane. Functionally, serves as a slightly cation selective porin. The polypeptide is Major outer membrane protein P.IB (porB) (Neisseria meningitidis serogroup B).